We begin with the raw amino-acid sequence, 128 residues long: Large ribosomal subunit protein uL22 (128 aa).

This sequence belongs to the universal ribosomal protein uL22 family. In terms of assembly, part of the 50S ribosomal subunit.

Its function is as follows. This protein binds specifically to 23S rRNA; its binding is stimulated by other ribosomal proteins, e.g. L4, L17, and L20. It is important during the early stages of 50S assembly. It makes multiple contacts with different domains of the 23S rRNA in the assembled 50S subunit and ribosome. Functionally, the globular domain of the protein is located near the polypeptide exit tunnel on the outside of the subunit, while an extended beta-hairpin is found that lines the wall of the exit tunnel in the center of the 70S ribosome. This Nitrobacter hamburgensis (strain DSM 10229 / NCIMB 13809 / X14) protein is Large ribosomal subunit protein uL22.